The following is a 265-amino-acid chain: 2-amino-3,7-dideoxy-D-threo-hept-6-ulosonate synthase (265 aa).

Asp25 (proton acceptor) is an active-site residue. Residues 25-29 (DHGIT) and 144-146 (YAR) each bind 1-deoxy-D-threo-hexo-2,5-diulose 6-phosphate. Residue Tyr144 is the Proton donor of the active site. The Schiff-base intermediate with substrate role is filled by Lys174. 1-deoxy-D-threo-hexo-2,5-diulose 6-phosphate is bound by residues 199–200 (GG) and 226–227 (GR).

Belongs to the DeoC/FbaB aldolase family. ADHS subfamily. In terms of assembly, homodecamer.

The catalysed reaction is 1-deoxy-D-threo-hexo-2,5-diulose 6-phosphate + L-aspartate 4-semialdehyde = 2,3-dioxopropyl phosphate + 2-amino-2,3,7-trideoxy-D-lyxo-hept-6-ulosonate. Catalyzes a transaldol reaction between 6-deoxy-5-ketofructose 1-phosphate (DKFP) and L-aspartate semialdehyde (ASA) with an elimination of hydroxypyruvaldehyde phosphate to yield 2-amino-3,7-dideoxy-D-threo-hept-6-ulosonate (ADH). Plays a key role in an alternative pathway of the biosynthesis of 3-dehydroquinate (DHQ), which is involved in the canonical pathway for the biosynthesis of aromatic amino acids. This chain is 2-amino-3,7-dideoxy-D-threo-hept-6-ulosonate synthase, found in Halobacterium salinarum (strain ATCC 700922 / JCM 11081 / NRC-1) (Halobacterium halobium).